The sequence spans 630 residues: Plastin-1 (630 aa).

Positions M1–E114 are fimbrin headpiece. 2 consecutive EF-hand domains span residues E11–P46 and K51–K86. Ca(2+) is bound by residues D24, D26, S28, Y30, E35, D64, N66, D68, K70, and E75. Actin-binding stretches follow at residues T108–T375 and Y376–R624. A fimbrin core region spans residues G115–K630. 4 Calponin-homology (CH) domains span residues E122–L238, L266–P377, S396–T505, and K517–L626.

As to quaternary structure, monomer. The N-terminus is blocked.

Its subcellular location is the cytoplasm. It is found in the cell projection. The protein localises to the stereocilium. Functionally, actin-bundling protein. In the inner ear, it is required for stereocilia formation. Mediates liquid packing of actin filaments that is necessary for stereocilia to grow to their proper dimensions. The chain is Plastin-1 (PLS1) from Gallus gallus (Chicken).